Reading from the N-terminus, the 397-residue chain is Elongation factor Tu (397 aa).

One can recognise a tr-type G domain in the interval 10–206 (KPHVNVGTIG…TMDTYFPQPE (197 aa)). A G1 region spans residues 19–26 (GHVDHGKT). 19-26 (GHVDHGKT) serves as a coordination point for GTP. Residue Thr-26 participates in Mg(2+) binding. The tract at residues 60 to 64 (GITIA) is G2. Positions 81 to 84 (DCPG) are G3. Residues 81 to 85 (DCPGH) and 136 to 139 (NKAD) contribute to the GTP site. Residues 136-139 (NKAD) form a G4 region. The interval 174–176 (SAL) is G5.

Belongs to the TRAFAC class translation factor GTPase superfamily. Classic translation factor GTPase family. EF-Tu/EF-1A subfamily. As to quaternary structure, monomer.

The protein resides in the cytoplasm. The catalysed reaction is GTP + H2O = GDP + phosphate + H(+). In terms of biological role, GTP hydrolase that promotes the GTP-dependent binding of aminoacyl-tRNA to the A-site of ribosomes during protein biosynthesis. This is Elongation factor Tu from Coxiella burnetii (strain Dugway 5J108-111).